The primary structure comprises 554 residues: MFNGLMDPEMIRLAQDQMSRMTPADFARIQQQMMSNPDLMNMATESMKNMRPEDLKQAAEQLKHTRPEDMAEISEKMAKASPEDIAAMRAHADAQFTYQINAAQMLKKQGNELHSRGNFSDAAEKYLRAKNNLKEIPSSKGGAILLACSLNLMSCYLKTNQHEECIKEGSEVLGYDARNVKALYRRGQAYRDLGLFEDAVSDLSKAHEVSPEDETIADVLRDVKERLAVEGPGKASRGVVIEDITEENNVTSGENKKPSKEANGHAQGVKTDVDGLQALRDNPEAIRTFQNFISKTDPDTLAALSGGKAGDMSPDMFKTASSMIGKMSPEEIQKMVQTASSFKGDNPFAPTAPSTENGFTPTPDMLKLASDMMGKMSPEERERMFNMASSLKANAPASTSYGNAEASEPRESLGASGSSSGNSFVAPRSGFEPSIPSAPPADLQEQMRNQMKDPAMRQMFTSMIKNMNPEMMASMSEQFGMKLSQEDAAKAQQAMASLSPDALEKMMRWADRAQTGMEKAKKAKKWLFGKGGLIFAILMLVLAMVLHRLGYIGN.

Over M1–K525 the chain is Cytoplasmic. TPR repeat units follow at residues A103 to I136 and V180 to D213. 2 disordered regions span residues T245–V269 and A395–P439. The span at E254–N263 shows a compositional bias: basic and acidic residues. Low complexity predominate over residues S412–S423. The chain crosses the membrane as a helical span at residues W526 to L546. Over H547 to N554 the chain is Lumenal.

In terms of assembly, interacts (via TPR region) with HSP70-1, but not with HSP90-2. Interacts with ERDJ2A and ERDJ2B. In the ER membrane, associates with ERDJ2 in membrane complexes of 140 and 200 kDa and specifically interacts with the HSP70 and HSP90 chaperones via its TPR domain. Ubiquitous. Highest expression in leaves and lowest in roots.

It is found in the endoplasmic reticulum membrane. It localises to the plastid. Its subcellular location is the chloroplast outer membrane. In terms of biological role, plays a role in protein import into the endoplasmic reticulum (ER). May function as chaperone docking protein during post-translational protein translocation into the ER. Chaperone receptor mediating Hsp70-dependent protein targeting to chloroplasts. Interacts specifically with some chloroplast precursors, but not with mitochondrial precursors. Able to select precursors for delivery to the chloroplast translocase independently of Hsp70. This Arabidopsis thaliana (Mouse-ear cress) protein is Outer envelope protein 61 (OEP61).